We begin with the raw amino-acid sequence, 127 residues long: Fluoride-specific ion channel FluC (127 aa).

A run of 4 helical transmembrane segments spans residues methionine 1–valine 21, glutamate 32–valine 52, threonine 71–tyrosine 91, and valine 96–leucine 116. Positions 75 and 78 each coordinate Na(+).

The protein belongs to the fluoride channel Fluc/FEX (TC 1.A.43) family.

It localises to the cell inner membrane. The catalysed reaction is fluoride(in) = fluoride(out). With respect to regulation, na(+) is not transported, but it plays an essential structural role and its presence is essential for fluoride channel function. Its function is as follows. Fluoride-specific ion channel. Important for reducing fluoride concentration in the cell, thus reducing its toxicity. The sequence is that of Fluoride-specific ion channel FluC from Granulibacter bethesdensis (strain ATCC BAA-1260 / CGDNIH1).